Reading from the N-terminus, the 102-residue chain is Small ribosomal subunit protein uS10 (102 aa).

This sequence belongs to the universal ribosomal protein uS10 family. Part of the 30S ribosomal subunit.

In terms of biological role, involved in the binding of tRNA to the ribosomes. The chain is Small ribosomal subunit protein uS10 from Methanobrevibacter smithii (strain ATCC 35061 / DSM 861 / OCM 144 / PS).